We begin with the raw amino-acid sequence, 250 residues long: Carboxymethylproline synthase (250 aa).

60–64 is a binding site for malonyl-CoA; sequence AGGDF.

The protein belongs to the enoyl-CoA hydratase/isomerase family. In terms of assembly, homotrimer.

The catalysed reaction is (S)-1-pyrroline-5-carboxylate + malonyl-CoA + H2O + H(+) = (2S,5S)-5-carboxymethylproline + CO2 + CoA. Its pathway is antibiotic biosynthesis; carbapenem biosynthesis. Its function is as follows. Catalyzes the formation of (2S,5S)-carboxymethylproline (t-CMP) from malonyl-CoA and (S)-1-pyrroline-5-carboxylate, the first step in the biosynthesis of (5R)-carbapen-2-em-3-carboxylate, a beta-lactam antibiotic of the carbapenem class. Also catalyzes the independent decarboxylation of malonyl-CoA and methylmalonyl-CoA and the hydrolysis of CoA esters such as acetyl-CoA and propionyl-CoA. Catalyzes the reaction with a C2 epimeric mixture of methylmalonyl-CoA to give a 55:45 mixture of (6R)- and (6S)-epimers of 6-methyl-t-CMP, under standard incubation conditions. This chain is Carboxymethylproline synthase, found in Pectobacterium carotovorum subsp. carotovorum (Erwinia carotovora subsp. carotovora).